The primary structure comprises 338 residues: Glycerol-3-phosphate dehydrogenase [NAD(P)+] (338 aa).

Residues Ser-13, Trp-14, and Lys-108 each coordinate NADPH. Sn-glycerol 3-phosphate is bound by residues Lys-108, Gly-139, and Ser-141. Ala-143 contacts NADPH. Positions 194, 247, 257, 258, and 259 each coordinate sn-glycerol 3-phosphate. The Proton acceptor role is filled by Lys-194. Residue Arg-258 coordinates NADPH. NADPH is bound by residues Val-282 and Glu-284.

This sequence belongs to the NAD-dependent glycerol-3-phosphate dehydrogenase family.

It localises to the cytoplasm. The catalysed reaction is sn-glycerol 3-phosphate + NAD(+) = dihydroxyacetone phosphate + NADH + H(+). The enzyme catalyses sn-glycerol 3-phosphate + NADP(+) = dihydroxyacetone phosphate + NADPH + H(+). It participates in membrane lipid metabolism; glycerophospholipid metabolism. Its function is as follows. Catalyzes the reduction of the glycolytic intermediate dihydroxyacetone phosphate (DHAP) to sn-glycerol 3-phosphate (G3P), the key precursor for phospholipid synthesis. The chain is Glycerol-3-phosphate dehydrogenase [NAD(P)+] from Streptococcus suis (strain 98HAH33).